A 70-amino-acid chain; its full sequence is Small ribosomal subunit protein bS21 (70 aa).

This sequence belongs to the bacterial ribosomal protein bS21 family.

This Campylobacter jejuni subsp. jejuni serotype O:23/36 (strain 81-176) protein is Small ribosomal subunit protein bS21.